The following is a 395-amino-acid chain: Bone morphogenetic protein 2 (395 aa).

Residues 1-23 (MVAGTRCLLALLLPQVLLGGAAG) form the signal peptide. A propeptide spans 24–281 (LIPELGRRKF…GHPLHRREKR (258 aa)) (cleaved by PCSK5). Ser-86 carries the phosphoserine modification. N-linked (GlcNAc...) asparagine glycosylation is found at Asn-134 and Asn-199. Positions 270–292 (GKGHPLHRREKRQAKHKQRKRLK) are disordered. Residues 273–292 (HPLHRREKRQAKHKQRKRLK) are compositionally biased toward basic residues. 3 disulfide bridges follow: Cys-295–Cys-360, Cys-324–Cys-392, and Cys-328–Cys-394. Residue Asn-337 is glycosylated (N-linked (GlcNAc...) asparagine).

The protein belongs to the TGF-beta family. Homodimer; disulfide-linked. Interacts with SOSTDC1. Interacts with GREM2, RGMA, RGMB and RGMC. Interacts with ASPN. Interacts with MAFP5. Interacts with FBN1 (via N-terminal domain) and FBN2. Interacts with type I receptor BMPR1A. Interacts with type II receptor BMPR2. Interacts with SCUBE3. Interacts with TNFAIP6 (primarily via Link domain); this interaction is inhibited by hyaluronan. Interacts with ERFE. Interacts with BMPR1A/ALK3; the interaction may induce HAMP expression. Forms heterodimers with BMP6 in vitro; the heterodimer then binds to its receptor BMPR1A /ALK3 and may induce HAMP expression. Interacts with TGFBR3.

It is found in the secreted. Functionally, growth factor of the TGF-beta superfamily that plays essential roles in many developmental processes, including cardiogenesis, neurogenesis, and osteogenesis. Induces cartilage and bone formation. Initiates the canonical BMP signaling cascade by associating with type I receptor BMPR1A and type II receptor BMPR2. Once all three components are bound together in a complex at the cell surface, BMPR2 phosphorylates and activates BMPR1A. In turn, BMPR1A propagates signal by phosphorylating SMAD1/5/8 that travel to the nucleus and act as activators and repressors of transcription of target genes. Also acts to promote expression of HAMP, via the interaction with its receptor BMPR1A/ALK3. Can also signal through non-canonical pathways such as ERK/MAP kinase signaling cascade that regulates osteoblast differentiation. Also stimulates the differentiation of myoblasts into osteoblasts via the EIF2AK3-EIF2A-ATF4 pathway by stimulating EIF2A phosphorylation which leads to increased expression of ATF4 which plays a central role in osteoblast differentiation. Acts as a positive regulator of odontoblast differentiation during mesenchymal tooth germ formation, expression is repressed during the bell stage by MSX1-mediated inhibition of CTNNB1 signaling. This Oryctolagus cuniculus (Rabbit) protein is Bone morphogenetic protein 2 (BMP2).